A 430-amino-acid polypeptide reads, in one-letter code: MDLLSDIEKQLQKATAQAFLIALSGGLDSTVLLSLFAKLCQKQPHLQILSLRAIHIHHGLSPNADSWAKHCQDLCDQFQIPLIIERVQVDKTNGIEAGAREARYQAIKKHLQTQEMLVTAHHLNDQTETFFLALKRGSGLQGLGAMQQQSVLFGMQILRPLLGFTRPQLEDYAQKEKLNWITDESNKDNRFDRNFLRNEILPELRARWAYFDLAVQRSAQHCFEQQQLINDLLSEAFAEHCQIKNQFKLCQFRKYSLAKQTALLRMWLAENQLEMPSKRQLTQLINDVVFAKEEANPQFQLVNKIIRRYQDRLYLTKPFSDLTKYCLKLEQNTLSLPDDLGNLSVQENEHNLIFHWQDFSVTLEKTDLPISIRFGYSGKVKHHPKRPREDIKKIWQELGVPPWERNRIPLIFYGNELKSAVGFFRVFDEY.

24–29 (SGGLDS) provides a ligand contact to ATP.

It belongs to the tRNA(Ile)-lysidine synthase family.

Its subcellular location is the cytoplasm. It carries out the reaction cytidine(34) in tRNA(Ile2) + L-lysine + ATP = lysidine(34) in tRNA(Ile2) + AMP + diphosphate + H(+). Its function is as follows. Ligates lysine onto the cytidine present at position 34 of the AUA codon-specific tRNA(Ile) that contains the anticodon CAU, in an ATP-dependent manner. Cytidine is converted to lysidine, thus changing the amino acid specificity of the tRNA from methionine to isoleucine. The sequence is that of tRNA(Ile)-lysidine synthase from Haemophilus influenzae (strain PittGG).